Reading from the N-terminus, the 316-residue chain is Protein lifeguard 2 (316 aa).

Residues 1–49 (MTQGKLSVANKAPGTEGQQQANGEKKDAPAVPSAPPSYEEATSGEGLKA) are disordered. The next 3 helical transmembrane spans lie at 106–126 (VYTI…LFTF), 138–158 (PGWY…LACC), and 165–185 (FPWN…LTGM). N-linked (GlcNAc...) asparagine glycosylation occurs at Asn-191. 4 helical membrane-spanning segments follow: residues 194–214 (SVLL…IFSF), 225–245 (GVLF…AILL), 251–271 (PWLH…FLAF), and 290–310 (IFGA…FLQL).

This sequence belongs to the BI1 family. LFG subfamily. In terms of assembly, interacts with FAS/TNFRSF6 and BAX. Expressed at high levels on dendrites and to a lesser extent on the soma and axons of neurons in various regions of brain.

The protein localises to the cell membrane. It localises to the membrane raft. Its subcellular location is the postsynaptic cell membrane. Functionally, antiapoptotic protein which protects cells uniquely from Fas-induced apoptosis. Regulates Fas-mediated apoptosis in neurons by interfering with caspase-8 activation. Plays a role in cerebellar development by affecting cerebellar size, internal granular layer (IGL) thickness, and Purkinje cell (PC) development. The polypeptide is Protein lifeguard 2 (Faim2) (Rattus norvegicus (Rat)).